The chain runs to 35 residues: Riboflavin-binding protein (35 aa).

Cys-5 and Cys-32 are oxidised to a cystine.

The protein belongs to the folate receptor family.

Its function is as follows. Required for the transport of riboflavin to the developing oocyte. The sequence is that of Riboflavin-binding protein from Struthio camelus (Common ostrich).